Here is a 302-residue protein sequence, read N- to C-terminus: Aspartate carbamoyltransferase catalytic subunit (302 aa).

Arg-53 and Thr-54 together coordinate carbamoyl phosphate. Lys-82 contributes to the L-aspartate binding site. Residues Arg-103, His-131, and Gln-134 each contribute to the carbamoyl phosphate site. L-aspartate is bound by residues Arg-164 and Arg-223. 2 residues coordinate carbamoyl phosphate: Leu-260 and Pro-261.

The protein belongs to the aspartate/ornithine carbamoyltransferase superfamily. ATCase family. As to quaternary structure, heterooligomer of catalytic and regulatory chains.

It catalyses the reaction carbamoyl phosphate + L-aspartate = N-carbamoyl-L-aspartate + phosphate + H(+). Its pathway is pyrimidine metabolism; UMP biosynthesis via de novo pathway; (S)-dihydroorotate from bicarbonate: step 2/3. In terms of biological role, catalyzes the condensation of carbamoyl phosphate and aspartate to form carbamoyl aspartate and inorganic phosphate, the committed step in the de novo pyrimidine nucleotide biosynthesis pathway. This Methanococcus maripaludis (strain C6 / ATCC BAA-1332) protein is Aspartate carbamoyltransferase catalytic subunit.